Here is a 152-residue protein sequence, read N- to C-terminus: D-aminoacyl-tRNA deacylase (152 aa).

Positions 142–143 (GP) match the Gly-cisPro motif, important for rejection of L-amino acids motif.

The protein belongs to the DTD family. In terms of assembly, homodimer.

The protein resides in the cytoplasm. The catalysed reaction is glycyl-tRNA(Ala) + H2O = tRNA(Ala) + glycine + H(+). The enzyme catalyses a D-aminoacyl-tRNA + H2O = a tRNA + a D-alpha-amino acid + H(+). In terms of biological role, an aminoacyl-tRNA editing enzyme that deacylates mischarged D-aminoacyl-tRNAs. Also deacylates mischarged glycyl-tRNA(Ala), protecting cells against glycine mischarging by AlaRS. Acts via tRNA-based rather than protein-based catalysis; rejects L-amino acids rather than detecting D-amino acids in the active site. By recycling D-aminoacyl-tRNA to D-amino acids and free tRNA molecules, this enzyme counteracts the toxicity associated with the formation of D-aminoacyl-tRNA entities in vivo and helps enforce protein L-homochirality. This is D-aminoacyl-tRNA deacylase from Burkholderia lata (strain ATCC 17760 / DSM 23089 / LMG 22485 / NCIMB 9086 / R18194 / 383).